The sequence spans 274 residues: Large ribosomal subunit protein uL2cz/uL2cy (274 aa).

Residues 1-15 (MAINLYKTSTPSTRN) are compositionally biased toward polar residues. Disordered regions lie at residues 1–22 (MAIN…DSQV) and 225–274 (PVDH…RRSK).

It belongs to the universal ribosomal protein uL2 family. Part of the 50S ribosomal subunit.

It is found in the plastid. The protein resides in the chloroplast. This is Large ribosomal subunit protein uL2cz/uL2cy (rpl2-A) from Lobularia maritima (Sweet alyssum).